A 286-amino-acid polypeptide reads, in one-letter code: Putative L-ribulose-5-phosphate 3-epimerase SgbU (286 aa).

Belongs to the L-ribulose-5-phosphate 3-epimerase family.

It catalyses the reaction L-ribulose 5-phosphate = L-xylulose 5-phosphate. Functionally, catalyzes the isomerization of L-xylulose-5-phosphate to L-ribulose-5-phosphate (Potential). May be involved in the utilization of 2,3-diketo-L-gulonate. The chain is Putative L-ribulose-5-phosphate 3-epimerase SgbU (sgbU) from Escherichia coli (strain K12).